The following is a 201-amino-acid chain: 3-isopropylmalate dehydratase small subunit (201 aa).

The protein belongs to the LeuD family. LeuD type 1 subfamily. As to quaternary structure, heterodimer of LeuC and LeuD.

It carries out the reaction (2R,3S)-3-isopropylmalate = (2S)-2-isopropylmalate. It functions in the pathway amino-acid biosynthesis; L-leucine biosynthesis; L-leucine from 3-methyl-2-oxobutanoate: step 2/4. Catalyzes the isomerization between 2-isopropylmalate and 3-isopropylmalate, via the formation of 2-isopropylmaleate. The sequence is that of 3-isopropylmalate dehydratase small subunit from Escherichia fergusonii (strain ATCC 35469 / DSM 13698 / CCUG 18766 / IAM 14443 / JCM 21226 / LMG 7866 / NBRC 102419 / NCTC 12128 / CDC 0568-73).